We begin with the raw amino-acid sequence, 872 residues long: Alanine--tRNA ligase (872 aa).

Zn(2+) is bound by residues H563, H567, C665, and H669.

The protein belongs to the class-II aminoacyl-tRNA synthetase family. Requires Zn(2+) as cofactor.

The protein localises to the cytoplasm. It catalyses the reaction tRNA(Ala) + L-alanine + ATP = L-alanyl-tRNA(Ala) + AMP + diphosphate. Catalyzes the attachment of alanine to tRNA(Ala) in a two-step reaction: alanine is first activated by ATP to form Ala-AMP and then transferred to the acceptor end of tRNA(Ala). Also edits incorrectly charged Ser-tRNA(Ala) and Gly-tRNA(Ala) via its editing domain. This is Alanine--tRNA ligase from Bacteroides fragilis (strain ATCC 25285 / DSM 2151 / CCUG 4856 / JCM 11019 / LMG 10263 / NCTC 9343 / Onslow / VPI 2553 / EN-2).